Reading from the N-terminus, the 526-residue chain is Inosine-5'-monophosphate dehydrogenase (526 aa).

CBS domains lie at 120-179 and 183-239; these read FIQD…EDPV and MATD…PLAS. Residues 276 to 278 and 326 to 328 each bind NAD(+); these read DSS and GMG. The K(+) site is built by Gly328 and Gly330. Ser331 contributes to the IMP binding site. Cys333 serves as a coordination point for K(+). Catalysis depends on Cys333, which acts as the Thioimidate intermediate. IMP-binding positions include 366 to 368 and 389 to 390; these read DGG and GS. Arg439 serves as the catalytic Proton acceptor. Position 451 (Gln451) interacts with IMP. Ser506 serves as a coordination point for K(+). Positions 506 to 526 are disordered; the sequence is SAQTEGNVHGLHTHEKKLYSS. Basic and acidic residues predominate over residues 517 to 526; the sequence is HTHEKKLYSS.

The protein belongs to the IMPDH/GMPR family. In terms of assembly, homotetramer. Requires K(+) as cofactor.

Its subcellular location is the cytoplasm. The enzyme catalyses IMP + NAD(+) + H2O = XMP + NADH + H(+). It functions in the pathway secondary metabolite biosynthesis; terpenoid biosynthesis. Its activity is regulated as follows. Mycophenolic acid (MPA) is a non-competitive inhibitor that prevents formation of the closed enzyme conformation by binding to the same site as the amobile flap. In contrast, mizoribine monophosphate (MZP) is a competitive inhibitor that induces the closed conformation. MPA is a potent inhibitor of mammalian IMPDHs but a poor inhibitor of the bacterial enzymes. MZP is a more potent inhibitor of bacterial IMPDH. Functionally, catalyzes the conversion of inosine 5'-phosphate (IMP) to xanthosine 5'-phosphate (XMP), the first committed and rate-limiting step in the de novo synthesis of guanine nucleotides, and therefore plays an important role in the regulation of cell growth. Part of the gene cluster that mediates the biosynthesis of mycophenolic acid (MPA), the first isolated antibiotic natural product in the world. Does not play a role in the biosynthesis of MPA, but is involved in self resistance to MPA, since MPA acts as an inhibitor of IMP dehydrogenases. The protein is Inosine-5'-monophosphate dehydrogenase of Penicillium roqueforti (strain FM164).